The primary structure comprises 493 residues: Inosine-5'-monophosphate dehydrogenase (493 aa).

2 CBS domains span residues 97-155 (VIID…NAPI) and 159-219 (MTSE…AKDE). NAD(+) is bound by residues Asp253 and 303–305 (GIG). K(+) contacts are provided by Gly305 and Gly307. Residue Ser308 participates in IMP binding. Cys310 provides a ligand contact to K(+). The Thioimidate intermediate role is filled by Cys310. IMP contacts are provided by residues 343-345 (DGG), 366-367 (GS), and 390-394 (YRGMG). Arg406 (proton acceptor) is an active-site residue. Glu421 contributes to the IMP binding site. K(+)-binding residues include Glu475, Ser476, and His477.

It belongs to the IMPDH/GMPR family. As to quaternary structure, homotetramer. It depends on K(+) as a cofactor.

It catalyses the reaction IMP + NAD(+) + H2O = XMP + NADH + H(+). It functions in the pathway purine metabolism; XMP biosynthesis via de novo pathway; XMP from IMP: step 1/1. With respect to regulation, mycophenolic acid (MPA) is a non-competitive inhibitor that prevents formation of the closed enzyme conformation by binding to the same site as the amobile flap. In contrast, mizoribine monophosphate (MZP) is a competitive inhibitor that induces the closed conformation. MPA is a potent inhibitor of mammalian IMPDHs but a poor inhibitor of the bacterial enzymes. MZP is a more potent inhibitor of bacterial IMPDH. Catalyzes the conversion of inosine 5'-phosphate (IMP) to xanthosine 5'-phosphate (XMP), the first committed and rate-limiting step in the de novo synthesis of guanine nucleotides, and therefore plays an important role in the regulation of cell growth. This chain is Inosine-5'-monophosphate dehydrogenase, found in Streptococcus pyogenes serotype M3 (strain ATCC BAA-595 / MGAS315).